Reading from the N-terminus, the 397-residue chain is Proteasome-activating nucleotidase (397 aa).

Positions aspartate 15–proline 58 form a coiled coil. ATP is bound by residues glycine 182 to leucine 187 and histidine 321. A docks into pockets in the proteasome alpha-ring to cause gate opening region spans residues methionine 395–glycine 397.

This sequence belongs to the AAA ATPase family. As to quaternary structure, homohexamer. The hexameric complex has a two-ring architecture resembling a top hat that caps the 20S proteasome core at one or both ends. Upon ATP-binding, the C-terminus of PAN interacts with the alpha-rings of the proteasome core by binding to the intersubunit pockets.

It localises to the cytoplasm. Its function is as follows. ATPase which is responsible for recognizing, binding, unfolding and translocation of substrate proteins into the archaeal 20S proteasome core particle. Is essential for opening the gate of the 20S proteasome via an interaction with its C-terminus, thereby allowing substrate entry and access to the site of proteolysis. Thus, the C-termini of the proteasomal ATPase function like a 'key in a lock' to induce gate opening and therefore regulate proteolysis. Unfolding activity requires energy from ATP hydrolysis, whereas ATP binding alone promotes ATPase-20S proteasome association which triggers gate opening, and supports translocation of unfolded substrates. This is Proteasome-activating nucleotidase from Thermococcus kodakarensis (strain ATCC BAA-918 / JCM 12380 / KOD1) (Pyrococcus kodakaraensis (strain KOD1)).